The following is a 492-amino-acid chain: N-succinylglutamate 5-semialdehyde dehydrogenase (492 aa).

Residue 220–225 (GSASTG) participates in NAD(+) binding. Active-site residues include E243 and C277.

This sequence belongs to the aldehyde dehydrogenase family. AstD subfamily.

The enzyme catalyses N-succinyl-L-glutamate 5-semialdehyde + NAD(+) + H2O = N-succinyl-L-glutamate + NADH + 2 H(+). Its pathway is amino-acid degradation; L-arginine degradation via AST pathway; L-glutamate and succinate from L-arginine: step 4/5. Catalyzes the NAD-dependent reduction of succinylglutamate semialdehyde into succinylglutamate. This Salmonella agona (strain SL483) protein is N-succinylglutamate 5-semialdehyde dehydrogenase.